Consider the following 373-residue polypeptide: 3 beta-hydroxysteroid dehydrogenase/Delta 5--&gt;4-isomerase type 1 (373 aa).

NADP(+) contacts are provided by residues 10–15 (GAGGFL), tyrosine 155, and lysine 159. Catalysis depends on lysine 159, which acts as the Proton donor. The helical transmembrane segment at 288–308 (VALLYWLGFLLELVSFLLRPV) threads the bilayer.

It belongs to the 3-beta-HSD family. In terms of tissue distribution, high levels in adrenal gland, kidney and male liver. Low levels in female liver.

It localises to the endoplasmic reticulum membrane. It is found in the mitochondrion membrane. It carries out the reaction a 3beta-hydroxy-Delta(5)-steroid + NAD(+) = a 3-oxo-Delta(5)-steroid + NADH + H(+). The catalysed reaction is pregnenolone + NAD(+) = pregn-5-ene-3,20-dione + NADH + H(+). It catalyses the reaction 3beta-hydroxyandrost-5-en-17-one + NAD(+) = androst-5-ene-3,17-dione + NADH + H(+). The enzyme catalyses androst-5-en-3beta,17beta-diol + NAD(+) = 17beta-hydroxy-androst-5-en-3-one + NADH + H(+). It carries out the reaction a 3beta-hydroxysteroid + NADP(+) = a 3-oxosteroid + NADPH + H(+). The catalysed reaction is 5alpha-androstane-3beta,17beta-diol + NADP(+) = 17beta-hydroxy-5alpha-androstan-3-one + NADPH + H(+). It catalyses the reaction 3beta-hydroxy-5alpha-androstan-17-one + NADP(+) = 5alpha-androstan-3,17-dione + NADPH + H(+). The enzyme catalyses a 3-oxo-Delta(5)-steroid = a 3-oxo-Delta(4)-steroid. It carries out the reaction pregn-5-ene-3,20-dione = progesterone. The catalysed reaction is androst-5-ene-3,17-dione = androst-4-ene-3,17-dione. It catalyses the reaction 17beta-hydroxy-androst-5-en-3-one = testosterone. The enzyme catalyses 5alpha-androstane-3beta,17beta-diol + NAD(+) = 17beta-hydroxy-5alpha-androstan-3-one + NADH + H(+). It functions in the pathway steroid hormone biosynthesis. Its pathway is steroid metabolism. Its function is as follows. A bifunctional enzyme responsible for the oxidation and isomerization of 3beta-hydroxy-Delta(5)-steroid precursors to 3-oxo-Delta(4)-steroids, an essential step in steroid hormone biosynthesis. Specifically catalyzes the conversion of pregnenolone to progesterone, 17alpha-hydroxypregnenolone to 17alpha-hydroxyprogesterone, dehydroepiandrosterone (DHEA) to 4-androstenedione, and androstenediol to testosterone. Additionally, catalyzes the interconversion between 3beta-hydroxy and 3-oxo-5alpha-androstane steroids controlling the bioavalability of the active forms. Specifically converts dihydrotestosterone to its inactive form 5alpha-androstanediol, that does not bind androgen receptor/AR. Also converts androstanedione, a precursor of testosterone and estrone, to epiandrosterone. Expected to use NAD(+) as preferred electron donor for the 3-beta-hydroxy-steroid dehydrogenase activity and NADPH for the 3-ketosteroid reductase activity. This is 3 beta-hydroxysteroid dehydrogenase/Delta 5--&gt;4-isomerase type 1 (HSD3B1) from Mesocricetus auratus (Golden hamster).